Here is a 248-residue protein sequence, read N- to C-terminus: Large ribosomal subunit protein uL4 (248 aa).

The segment at 69–92 (HVPRLKNGSRAAKVPQAKGGREAH) is disordered.

This sequence belongs to the universal ribosomal protein uL4 family. In terms of assembly, part of the 50S ribosomal subunit.

Its function is as follows. One of the primary rRNA binding proteins, this protein initially binds near the 5'-end of the 23S rRNA. It is important during the early stages of 50S assembly. It makes multiple contacts with different domains of the 23S rRNA in the assembled 50S subunit and ribosome. Forms part of the polypeptide exit tunnel. The chain is Large ribosomal subunit protein uL4 from Methanoregula boonei (strain DSM 21154 / JCM 14090 / 6A8).